Consider the following 149-residue polypeptide: Transcriptional repressor NrdR (149 aa).

A zinc finger spans residues 3–34; the sequence is CPFCSAVDTKVIDSRLVGDGSQVRRRRQCLVC. An ATP-cone domain is found at 49–139; the sequence is PRVVKSNGVR…VYRSFEDVRE (91 aa).

This sequence belongs to the NrdR family. Zn(2+) is required as a cofactor.

Its function is as follows. Negatively regulates transcription of bacterial ribonucleotide reductase nrd genes and operons by binding to NrdR-boxes. In Edwardsiella ictaluri (strain 93-146), this protein is Transcriptional repressor NrdR.